We begin with the raw amino-acid sequence, 795 residues long: MKFSELWLREWVNPAIDSDALANQITMAGLEVDGVEPVAGSFNGVVVGEVVECAQHPNADKLRVTKVNVGGERLLDIVCGAPNCRQGLKVAVATIGAILPGDFKIKAAKLRGEPSEGVLCSFSELGISDDHSGIIELPADAPLGTDIREYLKLDDNTIEISVTPNRADCLGIIGVARDVAVLNKAPLQELEMAPVTATISDTLPITVEAADACPRYLGRVVKGINVNAPTPLWMKEKLRRCGIRSIDAVVDVTNYVLLELGQPMHAFDKDRIDGGIVVRMAKEGETVVLLDGSEATLNADTLVIADHHKALGIAGIFGGEHSGVNGETQNVLLECAYFNPLSITGRARRHGLHTDASHRYERGVDPALQYKAIERATRLLLDICGGDAGPIIDVSNEATLPKRATITLRRSKLDRLIGHHIADEQVSDILRRLGCEVTEGQDEWKAVAPTWRFDMEIEEDLVEEVARVYGYNNIPDEPIQAGLIMGTHREADLSLKRVKTMLNDKGYQEVITYSFVDPKVQQLIHPGAEALLLPNPISVEMSAMRLSLWSGLLATVVYNQNRQQNRVRIFETGLRFVPDTQANLGIRQDLMLAGVICGNRYDEHWNLAKETVDFYDLKGDLEAVLDLTGKLGDIQFKAEMNPALHPGQSAAIYLKDERIGFIGVVHPELERKLDLNGRTLVFELEWNKLADRIVPQAREISRFPANRRDIAVVVAENVPAADILSECKKVGVNQVVGVNLFDVYRGKGVAEGYKSLAISLILQDTNRTLEEEEIAATVAKCVEALKERFQASLRD.

The 110-residue stretch at 39–148 folds into the tRNA-binding domain; that stretch reads AGSFNGVVVG…ADAPLGTDIR (110 aa). Positions 401–476 constitute a B5 domain; that stretch reads PKRATITLRR…RVYGYNNIPD (76 aa). Positions 454, 460, 463, and 464 each coordinate Mg(2+). Positions 701-794 constitute an FDX-ACB domain; the sequence is SRFPANRRDI…LKERFQASLR (94 aa).

The protein belongs to the phenylalanyl-tRNA synthetase beta subunit family. Type 1 subfamily. In terms of assembly, tetramer of two alpha and two beta subunits. Requires Mg(2+) as cofactor.

It is found in the cytoplasm. The enzyme catalyses tRNA(Phe) + L-phenylalanine + ATP = L-phenylalanyl-tRNA(Phe) + AMP + diphosphate + H(+). The protein is Phenylalanine--tRNA ligase beta subunit of Salmonella choleraesuis (strain SC-B67).